Here is a 318-residue protein sequence, read N- to C-terminus: ATP-dependent (S)-NAD(P)H-hydrate dehydratase (318 aa).

Positions 3–313 (AREVFKRVIP…KEIGPAFDSL (311 aa)) constitute a YjeF C-terminal domain. Residues Gly119 and 172 to 178 (NTNEFKR) each bind (6S)-NADPHX. Residues 210 to 214 (KGSKD) and 229 to 238 (TSLRRCGGQG) contribute to the ATP site. A (6S)-NADPHX-binding site is contributed by Asp239.

It belongs to the NnrD/CARKD family. The cofactor is Mg(2+).

The protein resides in the cytoplasm. The catalysed reaction is (6S)-NADHX + ATP = ADP + phosphate + NADH + H(+). It catalyses the reaction (6S)-NADPHX + ATP = ADP + phosphate + NADPH + H(+). Catalyzes the dehydration of the S-form of NAD(P)HX at the expense of ATP, which is converted to ADP. Together with NAD(P)HX epimerase, which catalyzes the epimerization of the S- and R-forms, the enzyme allows the repair of both epimers of NAD(P)HX, a damaged form of NAD(P)H that is a result of enzymatic or heat-dependent hydration. The polypeptide is ATP-dependent (S)-NAD(P)H-hydrate dehydratase (Batrachochytrium dendrobatidis (strain JAM81 / FGSC 10211) (Frog chytrid fungus)).